A 294-amino-acid chain; its full sequence is MNDALKTYLTGIGWFLLSLVSSSANDVMSKYLGTRLHSFEVAFFRFFFSSIVLLPFVFYHGKNTLKTSRPFVHILRGLLLFFGMTSWTYGLTIAPVTTATVVSFSIPLFTLILAVFFLNENIIWQRWVVTVVGFIGLVVTLKPHTEDFNPEILYFVLAAISFAMLDIINKKFVIKESMISMLFYSAIVTAVVSLPVASQYWLTPSGFELALLFVLGSSGSLILFFLLKAFSMVDATATAPYRYLELVISAIAAYFIFSEFPDKSTLHGAVIIIPATLFIIYSEKKAMSRKHESQ.

10 consecutive transmembrane segments (helical) span residues 4–24, 39–59, 74–91, 98–118, 121–141, 148–168, 177–197, 207–227, 237–257, and 260–280; these read ALKTYLTGIGWFLLSLVSSSA, FEVAFFRFFFSSIVLLPFVFY, ILRGLLLFFGMTSWTYGL, TATVVSFSIPLFTLILAVFFL, NIIWQRWVVTVVGFIGLVVTL, FNPEILYFVLAAISFAMLDII, SMISMLFYSAIVTAVVSLPVA, FELALLFVLGSSGSLILFFLL, ATAPYRYLELVISAIAAYFIF, and FPDKSTLHGAVIIIPATLFII. 2 EamA domains span residues 21-141 and 160-280; these read SSSA…VVTL and ISFA…LFII.

The protein belongs to the drug/metabolite transporter (DMT) superfamily. 10 TMS drug/metabolite exporter (DME) (TC 2.A.7.3) family.

The protein resides in the cell inner membrane. Transports S-adenosylmethionine. This chain is S-adenosylmethionine uptake transporter (sam), found in Rickettsia felis (strain ATCC VR-1525 / URRWXCal2) (Rickettsia azadi).